The following is a 273-amino-acid chain: 4-hydroxy-tetrahydrodipicolinate reductase (273 aa).

Residues 12–17 (GAGGRM) and glutamate 38 contribute to the NAD(+) site. Arginine 39 serves as a coordination point for NADP(+). NAD(+)-binding positions include 102–104 (GTT) and 126–129 (AANF). Histidine 159 functions as the Proton donor/acceptor in the catalytic mechanism. Residue histidine 160 participates in (S)-2,3,4,5-tetrahydrodipicolinate binding. Residue lysine 163 is the Proton donor of the active site. Position 169 to 170 (169 to 170 (GT)) interacts with (S)-2,3,4,5-tetrahydrodipicolinate.

It belongs to the DapB family. As to quaternary structure, homotetramer.

It is found in the cytoplasm. It catalyses the reaction (S)-2,3,4,5-tetrahydrodipicolinate + NAD(+) + H2O = (2S,4S)-4-hydroxy-2,3,4,5-tetrahydrodipicolinate + NADH + H(+). The catalysed reaction is (S)-2,3,4,5-tetrahydrodipicolinate + NADP(+) + H2O = (2S,4S)-4-hydroxy-2,3,4,5-tetrahydrodipicolinate + NADPH + H(+). It functions in the pathway amino-acid biosynthesis; L-lysine biosynthesis via DAP pathway; (S)-tetrahydrodipicolinate from L-aspartate: step 4/4. Catalyzes the conversion of 4-hydroxy-tetrahydrodipicolinate (HTPA) to tetrahydrodipicolinate. In Escherichia coli O157:H7, this protein is 4-hydroxy-tetrahydrodipicolinate reductase.